The primary structure comprises 217 residues: Ribosomal RNA small subunit methyltransferase G (217 aa).

Residues Gly-85, Leu-90, 135–136 (IE), and Arg-149 each bind S-adenosyl-L-methionine.

Belongs to the methyltransferase superfamily. RNA methyltransferase RsmG family.

It localises to the cytoplasm. It carries out the reaction guanosine(527) in 16S rRNA + S-adenosyl-L-methionine = N(7)-methylguanosine(527) in 16S rRNA + S-adenosyl-L-homocysteine. Specifically methylates the N7 position of guanine in position 527 of 16S rRNA. The polypeptide is Ribosomal RNA small subunit methyltransferase G (Acidiphilium cryptum (strain JF-5)).